A 399-amino-acid chain; its full sequence is Argininosuccinate synthase (399 aa).

Residues Ala-8 to Ser-16 and Ala-35 contribute to the ATP site. An L-citrulline-binding site is contributed by Tyr-87. Gly-117 lines the ATP pocket. Residues Thr-119, Asn-123, and Asp-124 each contribute to the L-aspartate site. Position 123 (Asn-123) interacts with L-citrulline. Residues Arg-127, Ser-176, Ser-185, Glu-261, and Tyr-273 each contribute to the L-citrulline site.

The protein belongs to the argininosuccinate synthase family. Type 1 subfamily. As to quaternary structure, homotetramer.

Its subcellular location is the cytoplasm. It carries out the reaction L-citrulline + L-aspartate + ATP = 2-(N(omega)-L-arginino)succinate + AMP + diphosphate + H(+). It participates in amino-acid biosynthesis; L-arginine biosynthesis; L-arginine from L-ornithine and carbamoyl phosphate: step 2/3. This is Argininosuccinate synthase from Buchnera aphidicola subsp. Cinara cedri (strain Cc).